Reading from the N-terminus, the 187-residue chain is Elongation factor P (187 aa).

It belongs to the elongation factor P family.

It localises to the cytoplasm. Its pathway is protein biosynthesis; polypeptide chain elongation. Functionally, involved in peptide bond synthesis. Stimulates efficient translation and peptide-bond synthesis on native or reconstituted 70S ribosomes in vitro. Probably functions indirectly by altering the affinity of the ribosome for aminoacyl-tRNA, thus increasing their reactivity as acceptors for peptidyl transferase. This Sphingopyxis alaskensis (strain DSM 13593 / LMG 18877 / RB2256) (Sphingomonas alaskensis) protein is Elongation factor P.